A 33-amino-acid polypeptide reads, in one-letter code: Pardaxin P-2 (33 aa).

It belongs to the pardaxin family. In terms of assembly, in aqueous solution exists as a tetramer.

The protein localises to the secreted. The protein resides in the target cell membrane. Functionally, exhibits unusual shark repellent and surfactant properties. Forms voltage-dependent, ion-permeable channels in membranes. At high concentration causes cell membrane lysis. The sequence is that of Pardaxin P-2 from Pardachirus pavoninus (Peacock sole).